The following is a 428-amino-acid chain: UPF0597 protein Dde_0807 (428 aa).

It belongs to the UPF0597 family.

This chain is UPF0597 protein Dde_0807, found in Oleidesulfovibrio alaskensis (strain ATCC BAA-1058 / DSM 17464 / G20) (Desulfovibrio alaskensis).